A 137-amino-acid polypeptide reads, in one-letter code: Large ribosomal subunit protein uL16 (137 aa).

This sequence belongs to the universal ribosomal protein uL16 family. Part of the 50S ribosomal subunit.

Binds 23S rRNA and is also seen to make contacts with the A and possibly P site tRNAs. The chain is Large ribosomal subunit protein uL16 from Methylobacterium sp. (strain 4-46).